Here is a 1538-residue protein sequence, read N- to C-terminus: CLIP-associating protein 1 (1538 aa).

HEAT repeat units lie at residues 87-124 and 163-200; these read AQIGTVLPSLIDRLGDAKDSVREQDQTLLLKIMDQAAN and LTLSKIVPHICNLLGDPNSQVRDAAINSLVEIYRHVGE. The interval 235–292 is disordered; it reads SANDKNFDDEDSVDGNRPSSASSTSSKAPPSSRRNVGMGTTRRLGSSTLGSKSSAAKE. Serine 246 is subject to Phosphoserine. Over residues 251-268 the composition is skewed to low complexity; the sequence is RPSSASSTSSKAPPSSRR. HEAT repeat units follow at residues 405–440 and 441–477; these read HGAEAIMPTIFNLIPNSAKIMATSGVVAVRLIIRHT and HIPRLIPVITSNCTSKSVAVRRRCFEFLDLLLQEWQT. The interval 543 to 783 is disordered; it reads SDSIVSLPQS…DRFGLGQPGR (241 aa). Phosphoserine occurs at positions 545, 548, 558, 559, and 568. The segment covering 548–567 has biased composition (low complexity); sequence SLPQSDRSSSSSQESLNRPL. Residues 574-594 show a composition bias toward low complexity; it reads TGSTTSRASTVSTKSVSTTGS. Serine 600 is subject to Phosphoserine. Over residues 606 to 628 the composition is skewed to low complexity; the sequence is AAASAKSKVSSSSGTTPFSSAAA. Phosphoserine is present on residues serine 636, serine 646, serine 647, and serine 649. The span at 645-658 shows a compositional bias: polar residues; sequence QSSGSATNVASTPD. Threonine 656 carries the phosphothreonine modification. An interaction with microtubules, MAPRE1 and MAPRE3 region spans residues 662 to 785; sequence RSRAKVVSQS…FGLGQPGRIP (124 aa). Positions 673-692 are enriched in low complexity; that stretch reads RSRSANPAGAGSRSSSPGKL. Phosphoserine occurs at positions 684, 688, 695, and 705. Over residues 693–705 the composition is skewed to gly residues; sequence LGSGYGGLTGGSS. A Phosphothreonine modification is found at threonine 711. The residue at position 714 (serine 714) is a Phosphoserine. Polar residues predominate over residues 724 to 733; that stretch reads QGCSRETSPN. A phosphoserine mark is found at serine 787, serine 797, and serine 823. Residues 974–1011 form an HEAT 5 repeat; sequence QQFNILMRFIVDQTQTPNLKVKVAILKYIESLARQMDP. Disordered stretches follow at residues 1080–1120 and 1136–1156; these read HLKN…CSHG and AKHPPPFSQPNSIPTAPSHKA. Residues 1082–1097 are compositionally biased toward polar residues; that stretch reads KNSSNTSVGSPSNTIG. Serine 1091 carries the phosphoserine modification. Residues threonine 1095 and threonine 1099 each carry the phosphothreonine modification. Over residues 1106–1115 the composition is skewed to low complexity; that stretch reads SRTSPLTSPT. Residue serine 1113 is modified to Phosphoserine. Serine 1196 and serine 1223 each carry phosphoserine. Residues 1215 to 1238 are disordered; sequence VSRDGGAASPATEGRGGSEVEGGR. The interaction with CLIP2 stretch occupies residues 1254-1538; that stretch reads RAFPGPRARD…SSSSDVSTHS (285 aa). The segment at 1254-1538 is interaction with PHLDB2 and RSN; sequence RAFPGPRARD…SSSSDVSTHS (285 aa). Residues 1256–1538 form a localization to kinetochores region; sequence FPGPRARDYN…SSSSDVSTHS (283 aa). Residues 1299–1330 adopt a coiled-coil conformation; it reads DHSDLVADLLKELSNHNERVEERKGALLELLK. 2 HEAT repeats span residues 1342-1379 and 1460-1497; these read EHFKTILLLLLETLGDKDHSIRALALRVLREILRNQPA and QLLVDIIPGLLQGYDNTESSVRKASVFCLVAIYSVIGE.

This sequence belongs to the CLASP family. Interacts with CLIP2, ERC1, MAPRE1, MAPRE3, microtubules, PHLDB2 and RSN. The interaction with ERC1 may be mediated by PHLDB2. Interacts with GCC2; recruits CLASP1 to Golgi membranes. Interacts with MACF1. Interacts with mtcl2 and MTCL1.

It is found in the cytoplasm. Its subcellular location is the cytoskeleton. The protein localises to the microtubule organizing center. The protein resides in the centrosome. It localises to the chromosome. It is found in the centromere. Its subcellular location is the kinetochore. The protein localises to the spindle. The protein resides in the golgi apparatus. It localises to the trans-Golgi network. Its function is as follows. Microtubule plus-end tracking protein that promotes the stabilization of dynamic microtubules. Involved in the nucleation of noncentrosomal microtubules originating from the trans-Golgi network (TGN). Required for the polarization of the cytoplasmic microtubule arrays in migrating cells towards the leading edge of the cell. May act at the cell cortex to enhance the frequency of rescue of depolymerizing microtubules by attaching their plus-ends to cortical platforms composed of ERC1 and PHLDB2. This cortical microtubule stabilizing activity is regulated at least in part by phosphatidylinositol 3-kinase signaling. Also performs a similar stabilizing function at the kinetochore which is essential for the bipolar alignment of chromosomes on the mitotic spindle. The polypeptide is CLIP-associating protein 1 (CLASP1) (Homo sapiens (Human)).